Consider the following 692-residue polypeptide: UvrABC system protein B (692 aa).

The Helicase ATP-binding domain maps to 32 to 187; it reads ENIENGEKAQ…LLNDLVGIQF (156 aa). 45 to 52 contacts ATP; it reads GATGTGKT. A Beta-hairpin motif is present at residues 98 to 121; sequence YYDYYQPEAYVPSSDTYIEKDSSV. In terms of domain architecture, Helicase C-terminal spans 436-631; it reads QIDDLVGEIH…TIKKEIRDLI (196 aa). The UVR domain occupies 656–691; the sequence is KALVKKLEKEMQQAAAALDFEGAAQLRDMVLELRAM.

The protein belongs to the UvrB family. In terms of assembly, forms a heterotetramer with UvrA during the search for lesions. Interacts with UvrC in an incision complex.

It localises to the cytoplasm. In terms of biological role, the UvrABC repair system catalyzes the recognition and processing of DNA lesions. A damage recognition complex composed of 2 UvrA and 2 UvrB subunits scans DNA for abnormalities. Upon binding of the UvrA(2)B(2) complex to a putative damaged site, the DNA wraps around one UvrB monomer. DNA wrap is dependent on ATP binding by UvrB and probably causes local melting of the DNA helix, facilitating insertion of UvrB beta-hairpin between the DNA strands. Then UvrB probes one DNA strand for the presence of a lesion. If a lesion is found the UvrA subunits dissociate and the UvrB-DNA preincision complex is formed. This complex is subsequently bound by UvrC and the second UvrB is released. If no lesion is found, the DNA wraps around the other UvrB subunit that will check the other stand for damage. The sequence is that of UvrABC system protein B from Lactococcus lactis subsp. cremoris (strain MG1363).